We begin with the raw amino-acid sequence, 328 residues long: Malate dehydrogenase (328 aa).

13–19 contributes to the NAD(+) binding site; sequence GGTGQIA. Residues Arg94 and Arg100 each contribute to the substrate site. Residues Asn107, Gln114, and 131 to 133 contribute to the NAD(+) site; that span reads VGN. Asn133 and Arg164 together coordinate substrate. His189 (proton acceptor) is an active-site residue.

It belongs to the LDH/MDH superfamily. MDH type 2 family.

The enzyme catalyses (S)-malate + NAD(+) = oxaloacetate + NADH + H(+). Functionally, catalyzes the reversible oxidation of malate to oxaloacetate. The protein is Malate dehydrogenase of Chlamydia felis (strain Fe/C-56) (Chlamydophila felis).